The sequence spans 307 residues: 2-dehydropantoate 2-reductase (307 aa).

NADP(+) contacts are provided by residues 7 to 12, Asn-102, and Ala-128; that span reads GSGAMG. Residue Asn-102 coordinates substrate. The active-site Proton donor is Lys-184. Substrate contacts are provided by Asn-188, Asn-192, and Ser-255. Glu-268 serves as a coordination point for NADP(+).

This sequence belongs to the ketopantoate reductase family.

The protein resides in the cytoplasm. It catalyses the reaction (R)-pantoate + NADP(+) = 2-dehydropantoate + NADPH + H(+). The protein operates within cofactor biosynthesis; (R)-pantothenate biosynthesis; (R)-pantoate from 3-methyl-2-oxobutanoate: step 2/2. In terms of biological role, catalyzes the NADPH-dependent reduction of ketopantoate into pantoic acid. The chain is 2-dehydropantoate 2-reductase (apbA) from Streptococcus pyogenes serotype M1.